A 159-amino-acid chain; its full sequence is Phosphopantetheine adenylyltransferase (159 aa).

Thr10 lines the substrate pocket. Residues 10–11 and His18 contribute to the ATP site; that span reads TF. Substrate contacts are provided by Lys42, Leu74, and Arg88. ATP contacts are provided by residues 89-91, Glu99, and 124-130; these read GLR and NSFISST.

This sequence belongs to the bacterial CoaD family. In terms of assembly, homohexamer. Mg(2+) is required as a cofactor.

The protein localises to the cytoplasm. It catalyses the reaction (R)-4'-phosphopantetheine + ATP + H(+) = 3'-dephospho-CoA + diphosphate. Its pathway is cofactor biosynthesis; coenzyme A biosynthesis; CoA from (R)-pantothenate: step 4/5. Functionally, reversibly transfers an adenylyl group from ATP to 4'-phosphopantetheine, yielding dephospho-CoA (dPCoA) and pyrophosphate. This is Phosphopantetheine adenylyltransferase from Shewanella halifaxensis (strain HAW-EB4).